A 158-amino-acid polypeptide reads, in one-letter code: Cyclic pyranopterin monophosphate synthase (158 aa).

Residues 75 to 77 and 113 to 114 contribute to the substrate site; these read LCH and ME. Aspartate 128 is an active-site residue.

It belongs to the MoaC family. In terms of assembly, homohexamer; trimer of dimers.

It carries out the reaction (8S)-3',8-cyclo-7,8-dihydroguanosine 5'-triphosphate = cyclic pyranopterin phosphate + diphosphate. Its pathway is cofactor biosynthesis; molybdopterin biosynthesis. Catalyzes the conversion of (8S)-3',8-cyclo-7,8-dihydroguanosine 5'-triphosphate to cyclic pyranopterin monophosphate (cPMP). In Ralstonia nicotianae (strain ATCC BAA-1114 / GMI1000) (Ralstonia solanacearum), this protein is Cyclic pyranopterin monophosphate synthase.